A 396-amino-acid chain; its full sequence is Phosphoglycerate kinase (396 aa).

Residues 21 to 23 (DLN), Arg-36, 59 to 62 (HLGR), Arg-113, and Arg-146 each bind substrate. Residues Lys-197, Glu-319, and 345 to 348 (GGDT) each bind ATP.

This sequence belongs to the phosphoglycerate kinase family. Monomer.

It is found in the cytoplasm. The catalysed reaction is (2R)-3-phosphoglycerate + ATP = (2R)-3-phospho-glyceroyl phosphate + ADP. Its pathway is carbohydrate degradation; glycolysis; pyruvate from D-glyceraldehyde 3-phosphate: step 2/5. In Legionella pneumophila (strain Corby), this protein is Phosphoglycerate kinase.